A 227-amino-acid polypeptide reads, in one-letter code: UPF0441 protein YPO0661/y3517/YP_2976 (227 aa).

The segment at 198–227 (GGFGESVAKQSSMQRSAATSSKTTTRSMGG) is disordered. A compositionally biased stretch (low complexity) spans 212-227 (RSAATSSKTTTRSMGG).

The protein belongs to the UPF0441 family.

In Yersinia pestis, this protein is UPF0441 protein YPO0661/y3517/YP_2976.